The primary structure comprises 546 residues: Chaperonin GroEL (546 aa).

ATP is bound by residues 29-32 (TLGP), lysine 50, 86-90 (DGTTT), glycine 414, 477-479 (NAL), and aspartate 493. The segment at 522–546 (KPEKDAPNPMAGMGGGGMGGMGGMM) is disordered. Over residues 533–546 (GMGGGGMGGMGGMM) the composition is skewed to gly residues.

It belongs to the chaperonin (HSP60) family. Forms a cylinder of 14 subunits composed of two heptameric rings stacked back-to-back. Interacts with the co-chaperonin GroES.

It is found in the cytoplasm. It catalyses the reaction ATP + H2O + a folded polypeptide = ADP + phosphate + an unfolded polypeptide.. Together with its co-chaperonin GroES, plays an essential role in assisting protein folding. The GroEL-GroES system forms a nano-cage that allows encapsulation of the non-native substrate proteins and provides a physical environment optimized to promote and accelerate protein folding. The polypeptide is Chaperonin GroEL (Leptospira borgpetersenii serovar Hardjo-bovis (strain JB197)).